The sequence spans 130 residues: S-protein homolog 32 (130 aa).

A signal peptide spans M1–G21.

Belongs to the plant self-incompatibility (S1) protein family.

Its subcellular location is the secreted. The protein is S-protein homolog 32 of Arabidopsis thaliana (Mouse-ear cress).